A 421-amino-acid chain; its full sequence is Gamma-glutamyl phosphate reductase (421 aa).

This sequence belongs to the gamma-glutamyl phosphate reductase family.

It localises to the cytoplasm. The enzyme catalyses L-glutamate 5-semialdehyde + phosphate + NADP(+) = L-glutamyl 5-phosphate + NADPH + H(+). Its pathway is amino-acid biosynthesis; L-proline biosynthesis; L-glutamate 5-semialdehyde from L-glutamate: step 2/2. Functionally, catalyzes the NADPH-dependent reduction of L-glutamate 5-phosphate into L-glutamate 5-semialdehyde and phosphate. The product spontaneously undergoes cyclization to form 1-pyrroline-5-carboxylate. The sequence is that of Gamma-glutamyl phosphate reductase from Pseudomonas paraeruginosa (strain DSM 24068 / PA7) (Pseudomonas aeruginosa (strain PA7)).